The following is a 603-amino-acid chain: MSNTLSLIQSNASNPKVWVVIGVTVAGIVILAETRKRRIRALREEDFGAFLDRFELLPFPPPPPPAAKQSLSGLTFSISDAFDVKDYITGFGCPQWKKTHEAAEKTAVVVTTLLKNGATCVGKTIMDELGFGIIGENKHYGTPINPLMPDNVPGGCSSGSAVSVGAELVDFSLGIDTTGGVRVPAAFCGILGFRPSQGTVSSVGVLPNSQSLETVGWFASDPSVLCQVGHALLNLSAVTHRRQRSLIFADDLFELSDIPKQKSVQVVRKAIENLSGYKTPKHVNVGQYVASNVPSLAEFCEQSGKSQNSASTLRALSSVMLAIQRHEFKTNHEEWWQTCKSFLGPRFSNDVVTALKSKNESIKSLYRVKNEMRATIQSLLKEDGILVIPTVADPPPRLNTKRNKSLNEFLDRTYALSCIASMSGCCQVTIPLGEHGDRPISVSLLTYYGGDKFLLDTTLDVYASLQDQAKLASNLAPVSDTNGNMEASEVMKEKGNAAYKGKQWNKAVNFYTEAIKLNGANATYYCNRAAAFLELCCFQQAEQDCTKAMLIDKKNVKAYLRRGTARESLVRYKEAAADFRHALVLEPQNKTAKVAEKRLRKHI.

Serine 2 carries the post-translational modification N-acetylserine. A helical transmembrane segment spans residues 16–32; the sequence is KVWVVIGVTVAGIVILA. 3 TPR repeats span residues 488–521, 523–555, and 556–589; these read SEVMKEKGNAAYKGKQWNKAVNFYTEAIKLNGAN, TYYCNRAAAFLELCCFQQAEQDCTKAMLIDKKN, and VKAYLRRGTARESLVRYKEAAADFRHALVLEPQN.

As to expression, expressed in roots and flower buds. Detected in leaves.

Its subcellular location is the mitochondrion outer membrane. Its function is as follows. Chaperone receptor mediating Hsp90-dependent protein targeting to mitochondria. This is Outer envelope protein 64, mitochondrial (OM64) from Arabidopsis thaliana (Mouse-ear cress).